The following is an 860-amino-acid chain: Pentatricopeptide repeat-containing protein At1g18900 (860 aa).

8 PPR repeats span residues 363 to 397 (DGHTYTTMVGNLGRAKQFGAINKLLDEMVRDGCQP), 398 to 432 (NTVTYNRLIHSYGRANYLNEAMNVFNQMQEAGCKP), 433 to 467 (DRVTYCTLIDIHAKAGFLDIAMDMYQRMQAGGLSP), 468 to 502 (DTFTYSVIINCLGKAGHLPAAHKLFCEMVDQGCTP), 503 to 537 (NLVTYNIMMDLHAKARNYQNALKLYRDMQNAGFEP), 538 to 572 (DKVTYSIVMEVLGHCGYLEEAEAVFTEMQQKNWIP), 573 to 607 (DEPVYGLLVDLWGKAGNVEKAWQWYQAMLHAGLRP), and 608 to 642 (NVPTCNSLLSTFLRVNKIAEAYELLQNMLALGLRP). In terms of domain architecture, Smr spans 760-843 (INLHVMSEGT…NSGCFVGSGE (84 aa)).

Belongs to the PPR family. P subfamily.

This chain is Pentatricopeptide repeat-containing protein At1g18900, found in Arabidopsis thaliana (Mouse-ear cress).